The following is a 255-amino-acid chain: Cell division protein ZapD (255 aa).

The protein belongs to the ZapD family. In terms of assembly, interacts with FtsZ.

The protein resides in the cytoplasm. Functionally, cell division factor that enhances FtsZ-ring assembly. Directly interacts with FtsZ and promotes bundling of FtsZ protofilaments, with a reduction in FtsZ GTPase activity. The protein is Cell division protein ZapD of Methylococcus capsulatus (strain ATCC 33009 / NCIMB 11132 / Bath).